Reading from the N-terminus, the 154-residue chain is Ascorbate-specific PTS system EIIA component (154 aa).

Residues 6-150 (SLAVNKSIRL…QEVLDLIDRT (145 aa)) form the PTS EIIA type-2 domain. Histidine 68 serves as the catalytic Tele-phosphohistidine intermediate. Histidine 68 bears the Phosphohistidine mark.

Its subcellular location is the cytoplasm. The phosphoenolpyruvate-dependent sugar phosphotransferase system (sugar PTS), a major carbohydrate active transport system, catalyzes the phosphorylation of incoming sugar substrates concomitantly with their translocation across the cell membrane. The enzyme II UlaABC PTS system is involved in ascorbate transport. This chain is Ascorbate-specific PTS system EIIA component (ulaC), found in Shigella dysenteriae serotype 1 (strain Sd197).